The chain runs to 213 residues: A-type ATP synthase subunit D (213 aa).

Belongs to the V-ATPase D subunit family. As to quaternary structure, has multiple subunits with at least A(3), B(3), C, D, E, F, H, I and proteolipid K(x).

The protein localises to the cell membrane. In terms of biological role, component of the A-type ATP synthase that produces ATP from ADP in the presence of a proton gradient across the membrane. The sequence is that of A-type ATP synthase subunit D from Saccharolobus solfataricus (strain ATCC 35092 / DSM 1617 / JCM 11322 / P2) (Sulfolobus solfataricus).